The sequence spans 1334 residues: Aldehyde oxidase 4 (1334 aa).

Positions 6-93 (DELIFFVNGK…GAAVTTVEGV (88 aa)) constitute a 2Fe-2S ferredoxin-type domain. [2Fe-2S] cluster-binding residues include cysteine 45, cysteine 50, cysteine 53, and cysteine 75. Glutamine 114 serves as a coordination point for Mo-molybdopterin. Positions 115, 118, 150, and 152 each coordinate [2Fe-2S] cluster. Cysteine 152 provides a ligand contact to Mo-molybdopterin. Residues 235-421 (FQGERTIWIM…LSVFIPYSGQ (187 aa)) form the FAD-binding PCMH-type domain. Residues 263-270 (LVMGNTAV), alanine 345, threonine 354, histidine 358, aspartate 367, and alanine 411 each bind FAD. Residues alanine 802, 802 to 803 (AF), leucine 1043, 1084 to 1087 (GSMG), glutamine 1199, and leucine 1263 contribute to the Mo-molybdopterin site. Glutamate 1265 serves as the catalytic Proton acceptor; for azaheterocycle hydroxylase activity.

It belongs to the xanthine dehydrogenase family. Homodimer. It depends on [2Fe-2S] cluster as a cofactor. FAD serves as cofactor. Requires Mo-molybdopterin as cofactor.

Its subcellular location is the cytoplasm. It catalyses the reaction an aldehyde + O2 + H2O = a carboxylate + H2O2 + H(+). The enzyme catalyses retinal + O2 + H2O = retinoate + H2O2 + H(+). Functionally, aldehyde oxidase able to catalyze the oxidation of retinaldehyde into retinoate. Acts as a negative modulator of the epidermal trophism. May be able to oxidize a wide variety of aldehydes into their corresponding carboxylates and to hydroxylate azaheterocycles. This is Aldehyde oxidase 4 (Aox4) from Rattus norvegicus (Rat).